We begin with the raw amino-acid sequence, 141 residues long: NADH-quinone oxidoreductase subunit A (141 aa).

3 helical membrane passes run 24–44 (LLALALYVALACIIVVSLLLA), 77–97 (VPFYLTAIFFVVFDVEVAFIA), and 106–126 (LGWAGLAQIAFFIITLLVALI).

It belongs to the complex I subunit 3 family. NDH-1 is composed of 14 different subunits. Subunits NuoA, H, J, K, L, M, N constitute the membrane sector of the complex.

It is found in the cell inner membrane. It carries out the reaction a quinone + NADH + 5 H(+)(in) = a quinol + NAD(+) + 4 H(+)(out). Its function is as follows. NDH-1 shuttles electrons from NADH, via FMN and iron-sulfur (Fe-S) centers, to quinones in the respiratory chain. The immediate electron acceptor for the enzyme in this species is believed to be ubiquinone. Couples the redox reaction to proton translocation (for every two electrons transferred, four hydrogen ions are translocated across the cytoplasmic membrane), and thus conserves the redox energy in a proton gradient. The chain is NADH-quinone oxidoreductase subunit A from Syntrophotalea carbinolica (strain DSM 2380 / NBRC 103641 / GraBd1) (Pelobacter carbinolicus).